Reading from the N-terminus, the 537-residue chain is Ataxin-10 homolog (537 aa).

Belongs to the ataxin-10 family.

Its subcellular location is the cytoplasm. May play a role in the regulation of cytokinesis. The chain is Ataxin-10 homolog (CTR86) from Kluyveromyces lactis (strain ATCC 8585 / CBS 2359 / DSM 70799 / NBRC 1267 / NRRL Y-1140 / WM37) (Yeast).